The sequence spans 108 residues: MADPRVRQIKIKTGVVKRLVKEKVMYEKEAKQQEEKIEKMRAEDGENYDIKKQAEILQESRMMIPDCQRRLEAAYLDLQRILENEKDLEEAEEYKEARLVLDSVKLEA.

Alanine 2 is subject to N-acetylalanine.

The protein belongs to the TBCA family. As to quaternary structure, supercomplex made of cofactors A to E. Cofactors A and D function by capturing and stabilizing tubulin in a quasi-native conformation. Cofactor E binds to the cofactor D-tubulin complex; interaction with cofactor C then causes the release of tubulin polypeptides that are committed to the native state.

The protein localises to the cytoplasm. The protein resides in the cytoskeleton. Its function is as follows. Tubulin-folding protein; involved in the early step of the tubulin folding pathway. This Homo sapiens (Human) protein is Tubulin-specific chaperone A (TBCA).